The primary structure comprises 859 residues: DNA mismatch repair protein MutS (859 aa).

Gly622 to Ser629 contributes to the ATP binding site.

The protein belongs to the DNA mismatch repair MutS family.

Functionally, this protein is involved in the repair of mismatches in DNA. It is possible that it carries out the mismatch recognition step. This protein has a weak ATPase activity. This is DNA mismatch repair protein MutS from Coxiella burnetii (strain Dugway 5J108-111).